Reading from the N-terminus, the 144-residue chain is Large ribosomal subunit protein uL16 (144 aa).

The segment covering Met-1–Lys-16 has biased composition (basic residues). Residues Met-1–Lys-22 are disordered.

It belongs to the universal ribosomal protein uL16 family. Part of the 50S ribosomal subunit.

Functionally, binds 23S rRNA and is also seen to make contacts with the A and possibly P site tRNAs. This chain is Large ribosomal subunit protein uL16, found in Brevibacillus brevis (strain 47 / JCM 6285 / NBRC 100599).